Consider the following 420-residue polypeptide: Exodeoxyribonuclease 7 large subunit (420 aa).

It belongs to the XseA family. As to quaternary structure, heterooligomer composed of large and small subunits.

It localises to the cytoplasm. The enzyme catalyses Exonucleolytic cleavage in either 5'- to 3'- or 3'- to 5'-direction to yield nucleoside 5'-phosphates.. Functionally, bidirectionally degrades single-stranded DNA into large acid-insoluble oligonucleotides, which are then degraded further into small acid-soluble oligonucleotides. The sequence is that of Exodeoxyribonuclease 7 large subunit from Helicobacter pylori (strain J99 / ATCC 700824) (Campylobacter pylori J99).